A 190-amino-acid polypeptide reads, in one-letter code: Inner membrane-spanning protein YciB (190 aa).

The next 5 helical transmembrane spans lie at 22–42 (IYVA…LTFA), 50–70 (MQLI…FLHD), 76–96 (WKVT…HAMG), 118–138 (INWA…YVAF), and 148–168 (FKVF…GFYI).

It belongs to the YciB family.

It localises to the cell inner membrane. Its function is as follows. Plays a role in cell envelope biogenesis, maintenance of cell envelope integrity and membrane homeostasis. The sequence is that of Inner membrane-spanning protein YciB from Vibrio campbellii (strain ATCC BAA-1116).